A 237-amino-acid chain; its full sequence is Phosphatidylserine decarboxylase proenzyme (237 aa).

The Schiff-base intermediate with substrate; via pyruvic acid role is filled by S206. S206 is subject to Pyruvic acid (Ser); by autocatalysis.

This sequence belongs to the phosphatidylserine decarboxylase family. PSD-A subfamily. Heterodimer of a large membrane-associated beta subunit and a small pyruvoyl-containing alpha subunit. Requires pyruvate as cofactor. Is synthesized initially as an inactive proenzyme. Formation of the active enzyme involves a self-maturation process in which the active site pyruvoyl group is generated from an internal serine residue via an autocatalytic post-translational modification. Two non-identical subunits are generated from the proenzyme in this reaction, and the pyruvate is formed at the N-terminus of the alpha chain, which is derived from the carboxyl end of the proenzyme. The post-translation cleavage follows an unusual pathway, termed non-hydrolytic serinolysis, in which the side chain hydroxyl group of the serine supplies its oxygen atom to form the C-terminus of the beta chain, while the remainder of the serine residue undergoes an oxidative deamination to produce ammonia and the pyruvoyl prosthetic group on the alpha chain.

It localises to the cell membrane. The catalysed reaction is a 1,2-diacyl-sn-glycero-3-phospho-L-serine + H(+) = a 1,2-diacyl-sn-glycero-3-phosphoethanolamine + CO2. It functions in the pathway phospholipid metabolism; phosphatidylethanolamine biosynthesis; phosphatidylethanolamine from CDP-diacylglycerol: step 2/2. In terms of biological role, catalyzes the formation of phosphatidylethanolamine (PtdEtn) from phosphatidylserine (PtdSer). The polypeptide is Phosphatidylserine decarboxylase proenzyme (Mycobacteroides abscessus (strain ATCC 19977 / DSM 44196 / CCUG 20993 / CIP 104536 / JCM 13569 / NCTC 13031 / TMC 1543 / L948) (Mycobacterium abscessus)).